Consider the following 393-residue polypeptide: NAD(P)H-quinone oxidoreductase subunit H, chloroplastic (393 aa).

The protein belongs to the complex I 49 kDa subunit family. In terms of assembly, NDH is composed of at least 16 different subunits, 5 of which are encoded in the nucleus.

It localises to the plastid. The protein localises to the chloroplast thylakoid membrane. It catalyses the reaction a plastoquinone + NADH + (n+1) H(+)(in) = a plastoquinol + NAD(+) + n H(+)(out). It carries out the reaction a plastoquinone + NADPH + (n+1) H(+)(in) = a plastoquinol + NADP(+) + n H(+)(out). Functionally, NDH shuttles electrons from NAD(P)H:plastoquinone, via FMN and iron-sulfur (Fe-S) centers, to quinones in the photosynthetic chain and possibly in a chloroplast respiratory chain. The immediate electron acceptor for the enzyme in this species is believed to be plastoquinone. Couples the redox reaction to proton translocation, and thus conserves the redox energy in a proton gradient. The protein is NAD(P)H-quinone oxidoreductase subunit H, chloroplastic of Cryptomeria japonica (Japanese cedar).